Consider the following 424-residue polypeptide: Histidine--tRNA ligase (424 aa).

The protein belongs to the class-II aminoacyl-tRNA synthetase family. Homodimer.

It localises to the cytoplasm. The enzyme catalyses tRNA(His) + L-histidine + ATP = L-histidyl-tRNA(His) + AMP + diphosphate + H(+). The chain is Histidine--tRNA ligase from Desulfitobacterium hafniense (strain DSM 10664 / DCB-2).